The sequence spans 132 residues: Small ribosomal subunit protein uS9 (132 aa).

Residues 104–132 (GYLTRDPRMKERKKYGLRKARRAPQFSKR) are disordered. Basic residues predominate over residues 113–132 (KERKKYGLRKARRAPQFSKR).

This sequence belongs to the universal ribosomal protein uS9 family.

The protein is Small ribosomal subunit protein uS9 of Natranaerobius thermophilus (strain ATCC BAA-1301 / DSM 18059 / JW/NM-WN-LF).